We begin with the raw amino-acid sequence, 178 residues long: RNA pyrophosphohydrolase (178 aa).

The Nudix hydrolase domain maps to P18–A171. A Nudix box motif is present at residues G59 to G80.

It belongs to the Nudix hydrolase family. RppH subfamily. The cofactor is a divalent metal cation.

Functionally, accelerates the degradation of transcripts by removing pyrophosphate from the 5'-end of triphosphorylated RNA, leading to a more labile monophosphorylated state that can stimulate subsequent ribonuclease cleavage. This chain is RNA pyrophosphohydrolase, found in Brucella canis (strain ATCC 23365 / NCTC 10854 / RM-666).